The primary structure comprises 504 residues: DnaJ homolog subfamily C member 3 (504 aa).

The first 31 residues, 1–31 (MVAPGSVGSRLGAVFPFLLVLVDLQYEGAEC), serve as a signal peptide directing secretion. TPR repeat units lie at residues 37-70 (VEKH…DPDN), 72-104 (IAYY…KMDF), 105-138 (TAAR…NPSE), 154-187 (MQRL…CVWD), 188-221 (AELR…KSDN), 222-255 (TEAF…DQDH), 268-301 (LNKL…EPSV), 306-339 (VRSK…EPDN), and 340-373 (VNAL…NEND). Cysteine 248 and cysteine 258 form a disulfide bridge. Serine 274 is modified (phosphoserine). An intrachain disulfide couples cysteine 313 to cysteine 329. Positions 375-393 (QIREGLEKAQRLLKQSQKR) are flexible linker. Residues 394 to 462 (DYYKILGVKR…EMRKKFDDGE (69 aa)) enclose the J domain. Residues 451–481 (DPEMRKKFDDGEDPLDAESQQGGGGNPFHRS) form a disordered region.

In terms of assembly, interacts with EIF2AK4/GCN2; this interaction occurs under endoplasmic reticulum (ER) stress, hypothermic and amino acid starving stress conditions and inhibits EIF2AK4/GCN2 kinase activity. Interacts with EIF2AK3. Interacts with EIF2AK2. Forms a trimeric complex with DNAJB1 and HSPA8. Interacts with THAP12. Widely expressed, with high level in the liver.

It is found in the endoplasmic reticulum. Its function is as follows. Involved in the unfolded protein response (UPR) during endoplasmic reticulum (ER) stress. Acts as a negative regulator of the EIF2AK4/GCN2 kinase activity by preventing the phosphorylation of eIF-2-alpha at 'Ser-52' and hence attenuating general protein synthesis under ER stress, hypothermic and amino acid starving stress conditions. Co-chaperone of HSPA8/HSC70, it stimulates its ATPase activity. May inhibit both the autophosphorylation of EIF2AK2/PKR and the ability of EIF2AK2 to catalyze phosphorylation of the EIF2A. May inhibit EIF2AK3/PERK activity. In Mus musculus (Mouse), this protein is DnaJ homolog subfamily C member 3 (Dnajc3).